Here is a 332-residue protein sequence, read N- to C-terminus: L-lactate dehydrogenase A-like 6A (332 aa).

A2 carries the N-acetylalanine modification. 2 positions are modified to N6-acetyllysine; alternate: K5 and K57. Residue K5 is modified to N6-succinyllysine; alternate. 29–57 (GSVGVACAISILLKGLSDELVLVDVDEGK) provides a ligand contact to NAD(+). K57 is covalently cross-linked (Glycyl lysine isopeptide (Lys-Gly) (interchain with G-Cter in SUMO2); alternate). K81 is modified (N6-acetyllysine). R99 lines the NAD(+) pocket. Residue R106 participates in substrate binding. K118 is modified (N6-acetyllysine; alternate). K118 bears the N6-succinyllysine; alternate mark. N138 lines the NAD(+) pocket. Substrate is bound by residues N138 and R169. The Proton acceptor role is filled by H193. An N6-acetyllysine modification is found at K232. The residue at position 239 (Y239) is a Phosphotyrosine. Residue K243 is modified to N6-acetyllysine. T248 provides a ligand contact to substrate. A Phosphothreonine modification is found at T309. K318 is subject to N6-acetyllysine; alternate. N6-succinyllysine; alternate is present on K318. T322 is modified (phosphothreonine).

It belongs to the LDH/MDH superfamily. LDH family. Testis-specific.

It localises to the cytoplasm. The catalysed reaction is (S)-lactate + NAD(+) = pyruvate + NADH + H(+). It participates in fermentation; pyruvate fermentation to lactate; (S)-lactate from pyruvate: step 1/1. Functionally, catalyzes the interconversion of L-lactate and pyruvate with nicotinamide adenine dinucleotide NAD(+) as a coenzyme. Significantly increases the transcriptional activity of JUN, when overexpressed. The sequence is that of L-lactate dehydrogenase A-like 6A (LDHAL6A) from Homo sapiens (Human).